Reading from the N-terminus, the 187-residue chain is Large ribosomal subunit protein uL5 (187 aa).

Belongs to the universal ribosomal protein uL5 family. As to quaternary structure, part of the 50S ribosomal subunit; part of the 5S rRNA/L5/L18/L25 subcomplex. Contacts the 5S rRNA and the P site tRNA. Forms a bridge to the 30S subunit in the 70S ribosome.

Functionally, this is one of the proteins that bind and probably mediate the attachment of the 5S RNA into the large ribosomal subunit, where it forms part of the central protuberance. In the 70S ribosome it contacts protein S13 of the 30S subunit (bridge B1b), connecting the 2 subunits; this bridge is implicated in subunit movement. Contacts the P site tRNA; the 5S rRNA and some of its associated proteins might help stabilize positioning of ribosome-bound tRNAs. In Gluconobacter oxydans (strain 621H) (Gluconobacter suboxydans), this protein is Large ribosomal subunit protein uL5.